Reading from the N-terminus, the 819-residue chain is Lon protease (819 aa).

A compositionally biased stretch (polar residues) spans 1 to 14; sequence MNSTNNTDSQNLDP. A disordered region spans residues 1–40; sequence MNSTNNTDSQNLDPNASEVEKLLDESAEAEEKVDDHTPPS. Basic and acidic residues predominate over residues 18-38; the sequence is EVEKLLDESAEAEEKVDDHTP. The 198-residue stretch at 42-239 folds into the Lon N-terminal domain; the sequence is LFILPLNKRP…KALVLLKKEL (198 aa). 392 to 399 serves as a coordination point for ATP; the sequence is GPPGVGKT. The region spanning 634–818 is the Lon proteolytic domain; the sequence is KTPVGVATGL…DDVFKIAFPG (185 aa). Residues serine 724 and lysine 767 contribute to the active site.

Belongs to the peptidase S16 family. In terms of assembly, homohexamer. Organized in a ring with a central cavity.

The protein resides in the cytoplasm. The enzyme catalyses Hydrolysis of proteins in presence of ATP.. In terms of biological role, ATP-dependent serine protease that mediates the selective degradation of mutant and abnormal proteins as well as certain short-lived regulatory proteins. Required for cellular homeostasis and for survival from DNA damage and developmental changes induced by stress. Degrades polypeptides processively to yield small peptide fragments that are 5 to 10 amino acids long. Binds to DNA in a double-stranded, site-specific manner. The sequence is that of Lon protease from Chlamydia trachomatis serovar D (strain ATCC VR-885 / DSM 19411 / UW-3/Cx).